We begin with the raw amino-acid sequence, 90 residues long: Protein P18 (90 aa).

A run of 3 helical transmembrane segments spans residues 1 to 21 (MPFG…RDTL), 37 to 57 (GFGY…IKPI), and 60 to 80 (PVNA…RGAI).

It is found in the virion membrane. In terms of biological role, component of the phage injection machinery. Required for DNA injection in the membrane transformation event. Involved in the formation of the membrane tail tube to connect the virus interior with the host cytosol. Essential for viral infectivity. This is Protein P18 (XVIII) from Acinetobacter calcoaceticus (Arthrobacter siderocapsulatus).